A 59-amino-acid chain; its full sequence is Large ribosomal subunit protein uL30 (59 aa).

It belongs to the universal ribosomal protein uL30 family. Part of the 50S ribosomal subunit.

This Listeria welshimeri serovar 6b (strain ATCC 35897 / DSM 20650 / CCUG 15529 / CIP 8149 / NCTC 11857 / SLCC 5334 / V8) protein is Large ribosomal subunit protein uL30.